Here is a 372-residue protein sequence, read N- to C-terminus: Tribbles homolog 1 (372 aa).

2 disordered regions span residues 1–23 (MRVGPVRSAMSGASQPRGPALLF) and 52–86 (ECSSPPDYLSPPGSPCSPQPPPAAPGAGGGSGSAP). The span at 59–75 (YLSPPGSPCSPQPPPAA) shows a compositional bias: pro residues. The 248-residue stretch at 91–338 (IADYLLLPLA…APEILLHPWF (248 aa)) folds into the Protein kinase domain. Residues 355–360 (DQIVPE) carry the COP1-binding motif.

It belongs to the protein kinase superfamily. CAMK Ser/Thr protein kinase family. Tribbles subfamily. As to quaternary structure, monomer. Interacts (via protein kinase domain) with CEBPA. Interacts with COP1. In terms of tissue distribution, expressed in most human tissues with the highest levels in skeletal muscle, thyroid gland, pancreas, peripheral blood leukocytes, and bone marrow.

In terms of biological role, adapter protein involved in protein degradation by interacting with COP1 ubiquitin ligase. The COP1-binding motif is masked by autoinhibitory interactions with the protein kinase domain. Serves to alter COP1 substrate specificity by directing the activity of COP1 toward CEBPA. Binds selectively the recognition sequence of CEBPA. Regulates myeloid cell differentiation by altering the expression of CEBPA in a COP1-dependent manner. Controls macrophage, eosinophil and neutrophil differentiation via the COP1-binding domain. Interacts with MAPK kinases and regulates activation of MAP kinases, but has no kinase activity. The sequence is that of Tribbles homolog 1 from Homo sapiens (Human).